The following is a 395-amino-acid chain: S-adenosylmethionine synthase (395 aa).

An ATP-binding site is contributed by His-15. Residue Asp-17 coordinates Mg(2+). Glu-43 serves as a coordination point for K(+). Positions 56 and 99 each coordinate L-methionine. Residues 99-109 (QSADIALGVDE) are flexible loop. ATP-binding positions include 174–176 (DGK), 240–241 (RF), Asp-249, 255–256 (RK), Ala-272, and Lys-276. Asp-249 serves as a coordination point for L-methionine. Lys-280 serves as a coordination point for L-methionine.

It belongs to the AdoMet synthase family. Homotetramer; dimer of dimers. Mg(2+) serves as cofactor. The cofactor is K(+).

The protein localises to the cytoplasm. It carries out the reaction L-methionine + ATP + H2O = S-adenosyl-L-methionine + phosphate + diphosphate. It functions in the pathway amino-acid biosynthesis; S-adenosyl-L-methionine biosynthesis; S-adenosyl-L-methionine from L-methionine: step 1/1. Catalyzes the formation of S-adenosylmethionine (AdoMet) from methionine and ATP. The overall synthetic reaction is composed of two sequential steps, AdoMet formation and the subsequent tripolyphosphate hydrolysis which occurs prior to release of AdoMet from the enzyme. In Alkaliphilus oremlandii (strain OhILAs) (Clostridium oremlandii (strain OhILAs)), this protein is S-adenosylmethionine synthase.